The primary structure comprises 251 residues: Outer membrane protein assembly factor BamD (251 aa).

Residues 1 to 19 (MKLTKLLSALLVIGLVLGG) form the signal peptide. A lipid anchor (N-palmitoyl cysteine) is attached at C20. C20 carries the S-diacylglycerol cysteine lipid modification. 3 TPR repeats span residues 33-66 (IATL…HPGN), 70-103 (PQAE…HPAN), and 166-199 (AGKE…YQTT).

It belongs to the BamD family. Part of the Bam complex.

Its subcellular location is the cell outer membrane. In terms of biological role, part of the outer membrane protein assembly complex, which is involved in assembly and insertion of beta-barrel proteins into the outer membrane. The polypeptide is Outer membrane protein assembly factor BamD (Rickettsia prowazekii (strain Madrid E)).